The sequence spans 233 residues: 7-cyano-7-deazaguanine synthase (233 aa).

7–17 contributes to the ATP binding site; it reads CSGGLDSVSLA. Cys-185, Cys-193, Cys-196, and Cys-199 together coordinate Zn(2+).

This sequence belongs to the QueC family. The cofactor is Zn(2+).

The catalysed reaction is 7-carboxy-7-deazaguanine + NH4(+) + ATP = 7-cyano-7-deazaguanine + ADP + phosphate + H2O + H(+). It functions in the pathway purine metabolism; 7-cyano-7-deazaguanine biosynthesis. Its function is as follows. Catalyzes the ATP-dependent conversion of 7-carboxy-7-deazaguanine (CDG) to 7-cyano-7-deazaguanine (preQ(0)). The polypeptide is 7-cyano-7-deazaguanine synthase (Ruegeria sp. (strain TM1040) (Silicibacter sp.)).